The chain runs to 130 residues: UPF0212 protein TSIB_1358 (130 aa).

This sequence belongs to the UPF0212 family.

This chain is UPF0212 protein TSIB_1358, found in Thermococcus sibiricus (strain DSM 12597 / MM 739).